The following is a 296-amino-acid chain: NAD kinase (296 aa).

Asp72 acts as the Proton acceptor in catalysis. NAD(+)-binding positions include 72–73 (DG), 146–147 (ND), Arg157, Lys174, Asp176, 187–192 (TAYALS), and Gln247.

Belongs to the NAD kinase family. A divalent metal cation serves as cofactor.

The protein localises to the cytoplasm. The catalysed reaction is NAD(+) + ATP = ADP + NADP(+) + H(+). In terms of biological role, involved in the regulation of the intracellular balance of NAD and NADP, and is a key enzyme in the biosynthesis of NADP. Catalyzes specifically the phosphorylation on 2'-hydroxyl of the adenosine moiety of NAD to yield NADP. The chain is NAD kinase from Pseudomonas syringae pv. tomato (strain ATCC BAA-871 / DC3000).